Consider the following 271-residue polypeptide: 3-methyl-2-oxobutanoate hydroxymethyltransferase (271 aa).

Mg(2+) contacts are provided by aspartate 51 and aspartate 90. Residues 51–52 (DS), aspartate 90, and lysine 118 each bind 3-methyl-2-oxobutanoate. Glutamate 120 is a binding site for Mg(2+). The active-site Proton acceptor is glutamate 186.

It belongs to the PanB family. In terms of assembly, homodecamer; pentamer of dimers. Requires Mg(2+) as cofactor.

The protein localises to the cytoplasm. The enzyme catalyses 3-methyl-2-oxobutanoate + (6R)-5,10-methylene-5,6,7,8-tetrahydrofolate + H2O = 2-dehydropantoate + (6S)-5,6,7,8-tetrahydrofolate. It functions in the pathway cofactor biosynthesis; (R)-pantothenate biosynthesis; (R)-pantoate from 3-methyl-2-oxobutanoate: step 1/2. Functionally, catalyzes the reversible reaction in which hydroxymethyl group from 5,10-methylenetetrahydrofolate is transferred onto alpha-ketoisovalerate to form ketopantoate. The sequence is that of 3-methyl-2-oxobutanoate hydroxymethyltransferase from Xanthomonas campestris pv. campestris (strain B100).